Consider the following 542-residue polypeptide: Probable folate-biopterin transporter 8, chloroplastic (542 aa).

The transit peptide at 1–78 (MERIMINPLL…GVSEFEETAR (78 aa)) directs the protein to the chloroplast. Residues 24 to 45 (LSSIHRQQQQQERQSNNNTLFM) are disordered. 12 helical membrane-spanning segments follow: residues 103 to 123 (FPWLALNFHMVHSLALQPSTL), 132 to 152 (LPMVAKPLYGVLSDVLYIGSG), 155 to 175 (VPYIAIGVFLQVLAWGSMGIF), 181 to 201 (VLPSLVACVLLSNLGASITEV), 223 to 243 (ALMASAAGGVLGNLLGGYLLL), 246 to 266 (PPKISFLVFSALLSLQLVVSL), 308 to 328 (LIWAVVSIAMVPLLSGSVFCY), 338 to 358 (SVIGMSKVIGQLMLLCLTVVY), 369 to 389 (PLIHIIQLLYGLSILLDYILV), 404 to 424 (VLCFSSLAEILAQFKILPFAV), 446 to 466 (LCLSQIVSAFLGVGLANLIGI), and 477 to 497 (GILIQSLAALAPLCFMHLVPM). The disordered stretch occupies residues 506 to 542 (GKRGISKRSRRNRRVGRVVDKESVTYRRERESEEAQR). Over residues 509–521 (GISKRSRRNRRVG) the composition is skewed to basic residues. A compositionally biased stretch (basic and acidic residues) spans 522–542 (RVVDKESVTYRRERESEEAQR).

The protein belongs to the major facilitator superfamily. Folate-biopterin transporter (TC 2.A.71) family.

The protein localises to the plastid. Its subcellular location is the chloroplast membrane. In terms of biological role, could mediate folate transport. This Arabidopsis thaliana (Mouse-ear cress) protein is Probable folate-biopterin transporter 8, chloroplastic.